The sequence spans 472 residues: Uronate isomerase (472 aa).

Belongs to the metallo-dependent hydrolases superfamily. Uronate isomerase family.

It catalyses the reaction D-glucuronate = D-fructuronate. The catalysed reaction is aldehydo-D-galacturonate = keto-D-tagaturonate. It functions in the pathway carbohydrate metabolism; pentose and glucuronate interconversion. The chain is Uronate isomerase from Xanthomonas oryzae pv. oryzae (strain MAFF 311018).